Consider the following 508-residue polypeptide: Photosystem II CP47 reaction center protein (508 aa).

6 helical membrane-spanning segments follow: residues 21–36 (SVHI…WAGS), 101–115 (IVFS…IWHW), 140–156 (GIHL…FGAF), 203–218 (IAAG…FHLS), 237–252 (VLSS…AFVV), and 457–472 (SFAL…HGAR).

This sequence belongs to the PsbB/PsbC family. PsbB subfamily. In terms of assembly, PSII is composed of 1 copy each of membrane proteins PsbA, PsbB, PsbC, PsbD, PsbE, PsbF, PsbH, PsbI, PsbJ, PsbK, PsbL, PsbM, PsbT, PsbX, PsbY, PsbZ, Psb30/Ycf12, at least 3 peripheral proteins of the oxygen-evolving complex and a large number of cofactors. It forms dimeric complexes. Requires Binds multiple chlorophylls. PSII binds additional chlorophylls, carotenoids and specific lipids. as cofactor.

The protein resides in the plastid. It is found in the chloroplast thylakoid membrane. Its function is as follows. One of the components of the core complex of photosystem II (PSII). It binds chlorophyll and helps catalyze the primary light-induced photochemical processes of PSII. PSII is a light-driven water:plastoquinone oxidoreductase, using light energy to abstract electrons from H(2)O, generating O(2) and a proton gradient subsequently used for ATP formation. The protein is Photosystem II CP47 reaction center protein of Manihot esculenta (Cassava).